The sequence spans 207 residues: MANTTIIGIAGGSGSGKTTVTNEIMKNLEGHSVALLAQDYYYKDQSHLTFEERLETNYDHPFAFDNDLLIENLKDLRNGHAVEVPTYDYTNHTRSNETIAFEPKDVIIVEGIFALENKTLRDMMDVKIYVDTDADLRILRRLVRDTKERGRSMESVINQYLNVVKPMHNQFIEPTKKYADIIIPEGGSNKVAIDIMTTKIQTLVSKQ.

11 to 18 contacts ATP; the sequence is GGSGSGKT.

Belongs to the uridine kinase family.

Its subcellular location is the cytoplasm. It carries out the reaction uridine + ATP = UMP + ADP + H(+). It catalyses the reaction cytidine + ATP = CMP + ADP + H(+). Its pathway is pyrimidine metabolism; CTP biosynthesis via salvage pathway; CTP from cytidine: step 1/3. It functions in the pathway pyrimidine metabolism; UMP biosynthesis via salvage pathway; UMP from uridine: step 1/1. This is Uridine kinase from Staphylococcus haemolyticus (strain JCSC1435).